The following is a 197-amino-acid chain: Phosphoheptose isomerase (197 aa).

One can recognise an SIS domain in the interval 36 to 197 (MVNALLNEGK…IDSQLFGSEE (162 aa)). 51 to 53 (NGG) contributes to the substrate binding site. 2 residues coordinate Zn(2+): His-60 and Glu-64. Substrate is bound by residues Glu-64, 93 to 94 (ND), 119 to 121 (STS), Ser-124, and Gln-174. Residues Gln-174 and His-182 each contribute to the Zn(2+) site.

Belongs to the SIS family. GmhA subfamily. Homotetramer. The cofactor is Zn(2+).

Its subcellular location is the cytoplasm. It carries out the reaction 2 D-sedoheptulose 7-phosphate = D-glycero-alpha-D-manno-heptose 7-phosphate + D-glycero-beta-D-manno-heptose 7-phosphate. It functions in the pathway carbohydrate biosynthesis; D-glycero-D-manno-heptose 7-phosphate biosynthesis; D-glycero-alpha-D-manno-heptose 7-phosphate and D-glycero-beta-D-manno-heptose 7-phosphate from sedoheptulose 7-phosphate: step 1/1. Its function is as follows. Catalyzes the isomerization of sedoheptulose 7-phosphate in D-glycero-D-manno-heptose 7-phosphate. The chain is Phosphoheptose isomerase from Pseudomonas syringae pv. syringae (strain B728a).